The chain runs to 720 residues: Glycine--tRNA ligase beta subunit (720 aa).

It belongs to the class-II aminoacyl-tRNA synthetase family. Tetramer of two alpha and two beta subunits.

It localises to the cytoplasm. The enzyme catalyses tRNA(Gly) + glycine + ATP = glycyl-tRNA(Gly) + AMP + diphosphate. The protein is Glycine--tRNA ligase beta subunit of Dinoroseobacter shibae (strain DSM 16493 / NCIMB 14021 / DFL 12).